An 81-amino-acid chain; its full sequence is Small ribosomal subunit protein bS16 (81 aa).

It belongs to the bacterial ribosomal protein bS16 family.

This chain is Small ribosomal subunit protein bS16, found in Nautilia profundicola (strain ATCC BAA-1463 / DSM 18972 / AmH).